A 182-amino-acid chain; its full sequence is Isopentenyl-diphosphate Delta-isomerase (182 aa).

Residues His-25 and His-32 each contribute to the Mn(2+) site. Positions 30-164 constitute a Nudix hydrolase domain; it reads LLHLAFSSWL…PWAFSPWMVM (135 aa). Cys-67 is an active-site residue. His-69 serves as a coordination point for Mn(2+). Residue Glu-87 participates in Mg(2+) binding. Residues Glu-114 and Glu-116 each contribute to the Mn(2+) site. Glu-116 is an active-site residue.

This sequence belongs to the IPP isomerase type 1 family. Homodimer. Mg(2+) is required as a cofactor. It depends on Mn(2+) as a cofactor.

It is found in the cytoplasm. The enzyme catalyses isopentenyl diphosphate = dimethylallyl diphosphate. It participates in isoprenoid biosynthesis; dimethylallyl diphosphate biosynthesis; dimethylallyl diphosphate from isopentenyl diphosphate: step 1/1. Functionally, catalyzes the 1,3-allylic rearrangement of the homoallylic substrate isopentenyl (IPP) to its highly electrophilic allylic isomer, dimethylallyl diphosphate (DMAPP). The polypeptide is Isopentenyl-diphosphate Delta-isomerase (Escherichia coli O127:H6 (strain E2348/69 / EPEC)).